The sequence spans 202 residues: uncharacterized protein (202 aa).

The interval 179 to 202 (FDEQDSTPELPPNYLLDSQKKSQG) is disordered.

This is an uncharacterized protein from Haemophilus influenzae (strain ATCC 51907 / DSM 11121 / KW20 / Rd).